Consider the following 519-residue polypeptide: Xylose import ATP-binding protein XylG (519 aa).

ABC transporter domains lie at 6-245 (LTMR…VGRE) and 262-507 (LEAR…LTPA). Residue 38–45 (GENGAGKS) participates in ATP binding.

It belongs to the ABC transporter superfamily. Xylose importer (TC 3.A.1.2.4) family. In terms of assembly, the complex is composed of two ATP-binding proteins (XylG), two transmembrane proteins (XylH) and a solute-binding protein (XylF).

It localises to the cell inner membrane. The catalysed reaction is D-xylose(out) + ATP + H2O = D-xylose(in) + ADP + phosphate + H(+). Part of the ABC transporter complex XylFGH involved in xylose import. Responsible for energy coupling to the transport system. The polypeptide is Xylose import ATP-binding protein XylG (Burkholderia ambifaria (strain ATCC BAA-244 / DSM 16087 / CCUG 44356 / LMG 19182 / AMMD) (Burkholderia cepacia (strain AMMD))).